Here is a 92-residue protein sequence, read N- to C-terminus: Large ribosomal subunit protein eL43 (92 aa).

The C4-type zinc-finger motif lies at 39-60; that stretch reads CSFCGKKAVKRGAAGIWNCSSC.

This sequence belongs to the eukaryotic ribosomal protein eL43 family.

In Eremothecium gossypii (strain ATCC 10895 / CBS 109.51 / FGSC 9923 / NRRL Y-1056) (Yeast), this protein is Large ribosomal subunit protein eL43 (RPL43).